The following is a 587-amino-acid chain: Tripartite motif-containing protein 29 (587 aa).

The segment at 1–71 (MEGADACRSN…SGEGKSGLFS (71 aa)) is disordered. A phosphoserine mark is found at Ser21, Ser28, Ser58, and Ser104. At Tyr106 the chain carries Phosphotyrosine. The segment at 220–260 (FEARKCPLHGKTMELFCQTDQTCICYLCMFQEHKNHSTVTV) adopts a B box-type zinc-finger fold. Residues Cys225, His228, Cys247, and His252 each coordinate Zn(2+). Residues 259-348 (TVEEAKAEKE…AVDQVKVIVD (90 aa)) are a coiled coil. Thr476 is subject to Phosphothreonine. Residue Ser489 is modified to Phosphoserine.

In terms of assembly, interacts with VIM and HINT1. Interacts with IKBKG/NEMO. Interacts with STING1.

It is found in the cytoplasm. Its subcellular location is the lysosome. Functionally, plays a crucial role in the regulation of macrophage activation in response to viral or bacterial infections within the respiratory tract. Mechanistically, TRIM29 interacts with IKBKG/NEMO in the lysosome where it induces its 'Lys-48' ubiquitination and subsequent degradation. In turn, the expression of type I interferons and the production of pro-inflammatory cytokines are inhibited. Additionally, induces the 'Lys-48' ubiquitination of STING1 in a similar way, leading to its degradation. This is Tripartite motif-containing protein 29 (Trim29) from Mus musculus (Mouse).